We begin with the raw amino-acid sequence, 218 residues long: tRNA (guanine-N(7)-)-methyltransferase (218 aa).

Positions 46, 71, 98, and 120 each coordinate S-adenosyl-L-methionine. D120 is a catalytic residue. Residue K124 coordinates substrate. An interaction with RNA region spans residues 126–131 (RHEKRR). Substrate-binding positions include D156 and 196–199 (TEYE).

It belongs to the class I-like SAM-binding methyltransferase superfamily. TrmB family.

It catalyses the reaction guanosine(46) in tRNA + S-adenosyl-L-methionine = N(7)-methylguanosine(46) in tRNA + S-adenosyl-L-homocysteine. The protein operates within tRNA modification; N(7)-methylguanine-tRNA biosynthesis. Catalyzes the formation of N(7)-methylguanine at position 46 (m7G46) in tRNA. The chain is tRNA (guanine-N(7)-)-methyltransferase from Lactobacillus johnsonii (strain CNCM I-12250 / La1 / NCC 533).